Consider the following 208-residue polypeptide: Uracil phosphoribosyltransferase (208 aa).

5-phospho-alpha-D-ribose 1-diphosphate contacts are provided by residues Arg78, Arg103, and 130 to 138 (DPMLATANS). Uracil-binding positions include Ile193 and 198–200 (GDA). Asp199 provides a ligand contact to 5-phospho-alpha-D-ribose 1-diphosphate.

The protein belongs to the UPRTase family. The cofactor is Mg(2+).

It carries out the reaction UMP + diphosphate = 5-phospho-alpha-D-ribose 1-diphosphate + uracil. It functions in the pathway pyrimidine metabolism; UMP biosynthesis via salvage pathway; UMP from uracil: step 1/1. Allosterically activated by GTP. Functionally, catalyzes the conversion of uracil and 5-phospho-alpha-D-ribose 1-diphosphate (PRPP) to UMP and diphosphate. The sequence is that of Uracil phosphoribosyltransferase from Brucella melitensis biotype 2 (strain ATCC 23457).